The primary structure comprises 537 residues: CTP synthase (537 aa).

The tract at residues 1–267 is amidoligase domain; it reads MTKYIFVTGG…DQIVCDHLKL (267 aa). Position 13 (Ser-13) interacts with CTP. Ser-13 contacts UTP. 14 to 19 serves as a coordination point for ATP; it reads SIGKGI. Tyr-54 contacts L-glutamine. Position 71 (Asp-71) interacts with ATP. Residues Asp-71 and Glu-141 each contribute to the Mg(2+) site. Residues 148–150, 188–193, and Lys-224 contribute to the CTP site; these read DIE and KTKPTQ. UTP contacts are provided by residues 188 to 193 and Lys-224; that span reads KTKPTQ. 240 to 242 serves as a coordination point for ATP; it reads RDV. Residues 292–535 enclose the Glutamine amidotransferase type-1 domain; sequence RIALVGKYVE…VTAAVKNKNQ (244 aa). Gly-354 provides a ligand contact to L-glutamine. Catalysis depends on Cys-381, which acts as the Nucleophile; for glutamine hydrolysis. L-glutamine is bound by residues 382–385, Glu-405, and Arg-463; that span reads LGMQ. Residues His-508 and Glu-510 contribute to the active site.

This sequence belongs to the CTP synthase family. As to quaternary structure, homotetramer.

It carries out the reaction UTP + L-glutamine + ATP + H2O = CTP + L-glutamate + ADP + phosphate + 2 H(+). The catalysed reaction is L-glutamine + H2O = L-glutamate + NH4(+). The enzyme catalyses UTP + NH4(+) + ATP = CTP + ADP + phosphate + 2 H(+). The protein operates within pyrimidine metabolism; CTP biosynthesis via de novo pathway; CTP from UDP: step 2/2. Its activity is regulated as follows. Allosterically activated by GTP, when glutamine is the substrate; GTP has no effect on the reaction when ammonia is the substrate. The allosteric effector GTP functions by stabilizing the protein conformation that binds the tetrahedral intermediate(s) formed during glutamine hydrolysis. Inhibited by the product CTP, via allosteric rather than competitive inhibition. Catalyzes the ATP-dependent amination of UTP to CTP with either L-glutamine or ammonia as the source of nitrogen. Regulates intracellular CTP levels through interactions with the four ribonucleotide triphosphates. In Streptococcus equi subsp. equi (strain 4047), this protein is CTP synthase.